The chain runs to 790 residues: F-box and leucine-rich repeat protein 13 (790 aa).

The region spanning 237–283 is the F-box domain; sequence AFDISVLPEQAILQIFLYLTFKDMMACSRVNRSWMAMIQRGSLWNSI. LRR repeat units lie at residues 503-525, 531-552, 557-579, 582-602, 606-628, and 632-657; these read QLTV…HFFD, RLRE…IRLS, NLHY…YIAS, SLIS…TILS, KLRE…AYCK, and LLEH…IFCT.

Belongs to the DRC6 family. Component of the nexin-dynein regulatory complex (N-DRC). Directly interacts with SKP1 and CUL1. Interacts with TCTE1/DRC5.

It localises to the cytoplasm. It is found in the cytoskeleton. The protein resides in the flagellum axoneme. Its subcellular location is the microtubule organizing center. The protein localises to the centrosome. Substrate-recognition component of the SCF (SKP1-CUL1-F-box protein)-type E3 ubiquitin ligase complex. Component of the nexin-dynein regulatory complex (N-DRC), a key regulator of ciliary/flagellar motility which maintains the alignment and integrity of the distal axoneme and regulates microtubule sliding in motile axonemes. Specifically targets CEP192 isoform 3 for ubiquitin-mediated proteolysis and thereby acts as a regulator of microtubule nucleation activity. The protein is F-box and leucine-rich repeat protein 13 (Fbxl13) of Mus musculus (Mouse).